The chain runs to 325 residues: Beta-ketoacyl-[acyl-carrier-protein] synthase III (325 aa).

Catalysis depends on residues C112 and H250. Residues 251–255 (QANIR) form an ACP-binding region. N280 is an active-site residue.

Belongs to the thiolase-like superfamily. FabH family. Homodimer.

It is found in the cytoplasm. The enzyme catalyses malonyl-[ACP] + acetyl-CoA + H(+) = 3-oxobutanoyl-[ACP] + CO2 + CoA. It participates in lipid metabolism; fatty acid biosynthesis. Functionally, catalyzes the condensation reaction of fatty acid synthesis by the addition to an acyl acceptor of two carbons from malonyl-ACP. Catalyzes the first condensation reaction which initiates fatty acid synthesis and may therefore play a role in governing the total rate of fatty acid production. Possesses both acetoacetyl-ACP synthase and acetyl transacylase activities. Its substrate specificity determines the biosynthesis of branched-chain and/or straight-chain of fatty acids. The polypeptide is Beta-ketoacyl-[acyl-carrier-protein] synthase III (Streptococcus mutans serotype c (strain ATCC 700610 / UA159)).